Reading from the N-terminus, the 349-residue chain is Probable L-asparaginase periplasmic (349 aa).

A signal peptide spans 1–21; sequence MKLTKLALCTLFGLGVSIANA. The Asparaginase/glutaminase domain occupies 25–349; that stretch reads PNITILATGG…KVIQQYFEDF (325 aa). T35 functions as the O-isoaspartyl threonine intermediate in the catalytic mechanism. Substrate-binding positions include S81 and 112 to 113; that span reads TD. A disulfide bridge connects residues C100 and C128.

Belongs to the asparaginase 1 family.

It localises to the periplasm. It catalyses the reaction L-asparagine + H2O = L-aspartate + NH4(+). The polypeptide is Probable L-asparaginase periplasmic (ansB) (Haemophilus influenzae (strain ATCC 51907 / DSM 11121 / KW20 / Rd)).